A 149-amino-acid chain; its full sequence is Large ribosomal subunit protein bL20m (149 aa).

The transit peptide at 1 to 9 (MVFLSLSRW) directs the protein to the mitochondrion.

It belongs to the bacterial ribosomal protein bL20 family. As to quaternary structure, component of the mitochondrial ribosome large subunit (39S) which comprises a 16S rRNA and about 50 distinct proteins.

The protein localises to the mitochondrion. The protein is Large ribosomal subunit protein bL20m (mrpl20) of Xenopus laevis (African clawed frog).